Consider the following 968-residue polypeptide: RNA polymerase-associated protein RapA (968 aa).

In terms of domain architecture, Helicase ATP-binding spans 164 to 334 (EVGQRHAPRV…FARLRLLDPN (171 aa)). 177 to 184 (DEVGLGKT) lines the ATP pocket. Positions 280–283 (DEAH) match the DEAH box motif. The Helicase C-terminal domain maps to 490–664 (RVEWLLNYLV…AAPTEQEGLD (175 aa)).

This sequence belongs to the SNF2/RAD54 helicase family. RapA subfamily. As to quaternary structure, interacts with the RNAP. Has a higher affinity for the core RNAP than for the holoenzyme. Its ATPase activity is stimulated by binding to RNAP.

Its function is as follows. Transcription regulator that activates transcription by stimulating RNA polymerase (RNAP) recycling in case of stress conditions such as supercoiled DNA or high salt concentrations. Probably acts by releasing the RNAP, when it is trapped or immobilized on tightly supercoiled DNA. Does not activate transcription on linear DNA. Probably not involved in DNA repair. This chain is RNA polymerase-associated protein RapA, found in Serratia proteamaculans (strain 568).